The primary structure comprises 388 residues: Succinyl-diaminopimelate desuccinylase (388 aa).

H84 lines the Zn(2+) pocket. Residue D86 is part of the active site. D115 is a Zn(2+) binding site. E146 (proton acceptor) is an active-site residue. The Zn(2+) site is built by E147, E175, and H360.

This sequence belongs to the peptidase M20A family. DapE subfamily. As to quaternary structure, homodimer. Requires Zn(2+) as cofactor. Co(2+) serves as cofactor.

It catalyses the reaction N-succinyl-(2S,6S)-2,6-diaminopimelate + H2O = (2S,6S)-2,6-diaminopimelate + succinate. The protein operates within amino-acid biosynthesis; L-lysine biosynthesis via DAP pathway; LL-2,6-diaminopimelate from (S)-tetrahydrodipicolinate (succinylase route): step 3/3. Its function is as follows. Catalyzes the hydrolysis of N-succinyl-L,L-diaminopimelic acid (SDAP), forming succinate and LL-2,6-diaminopimelate (DAP), an intermediate involved in the bacterial biosynthesis of lysine and meso-diaminopimelic acid, an essential component of bacterial cell walls. This is Succinyl-diaminopimelate desuccinylase from Helicobacter pylori (strain G27).